The following is a 265-amino-acid chain: Phosphonoacetaldehyde hydrolase (265 aa).

Residue Asp10 is the Nucleophile of the active site. Mg(2+) is bound by residues Asp10 and Ala12. Lys51 acts as the Schiff-base intermediate with substrate in catalysis. Asp184 serves as a coordination point for Mg(2+).

It belongs to the HAD-like hydrolase superfamily. PhnX family. As to quaternary structure, homodimer. Mg(2+) serves as cofactor.

It carries out the reaction phosphonoacetaldehyde + H2O = acetaldehyde + phosphate + H(+). Its function is as follows. Involved in phosphonate degradation. This chain is Phosphonoacetaldehyde hydrolase, found in Latilactobacillus sakei subsp. sakei (strain 23K) (Lactobacillus sakei subsp. sakei).